Reading from the N-terminus, the 1961-residue chain is Ankyrin-3 (1961 aa).

Positions 1–10 are enriched in basic and acidic residues; it reads MSEEPKEKPA. A disordered region spans residues 1 to 25; sequence MSEEPKEKPAKPAHRKRKGKKSDAN. Over residues 11–20 the composition is skewed to basic residues; that stretch reads KPAHRKRKGK. Phosphoserine is present on Ser-22. 23 ANK repeats span residues 56 to 85, 89 to 118, 122 to 151, 155 to 184, 186 to 213, 217 to 246, 250 to 279, 283 to 312, 316 to 345, 349 to 378, 382 to 411, 415 to 444, 448 to 477, 481 to 510, 514 to 543, 547 to 576, 580 to 609, 613 to 642, 646 to 675, 679 to 708, 712 to 741, 745 to 774, and 778 to 807; these read NGLNALHLASKEGHVEVVSELLQREANVDA, KGNTALHIASLAGQAEVVKVLVTNGANVNA, NGFTPLYMAAQENHLEVVRFLLDNGASQSL, DGFTPLAVALQQGHDQVVSLLLENDTKGKV, LPALHIAARKDDTKAAALLLQNDTNADV, SGFTPLHIAAHYGNINVATLLLNRAAAVDF, NDITPLHVASKRGNANMVKLLLDRGAKIDA, DGLTPLHCGARSGHEQVVEMLLDRSAPILS, NGLSPLHMATQGDHLNCVQLLLQHNVPVDD, DYLTALHVAAHCGHYKVAKVLLDKKASPNA, NGFTPLHIACKKNRIRVMELLLKHGASIQA, SGLTPIHVAAFMGHVNIVSQLMHHGASPNT, RGETALHMAARSGQAEVVRYLVQDGAQVEA, DDQTPLHISARLGKADIVQQLLQQGASPNA, SGYTPLHLAAREGHEDVAAFLLDHGASLSI, KGFTPLHVAAKYGKLEVASLLLQKSASPDA, SGLTPLHVAAHYDNQKVALLLLDQGASPHA, NGYTPLHIAAKKNQMDIATSLLEYGADANA, QGIASVHLAAQEGHVDMVSLLLSRNANVNL, SGLTPLHLAAQEDRVNVAEVLVNQGAHVDA, MGYTPLHVGCHYGNIKIVNFLLQHSAKVNA, NGYTALHQAAQQGHTHIINVLLQNNASPNE, and NGNTALAIARRLGYISVVDTLKVVTEEIMT. Ser-606 carries the phosphoserine modification. The residue at position 732 (Leu-732) is a Phosphoserine. A phosphoserine mark is found at Ser-830, Ser-844, Ser-850, Ser-873, Ser-914, Ser-917, Ser-923, Ser-958, Ser-960, and Ser-1114. 2 consecutive ZU5 domains span residues 985 to 1140 and 1142 to 1289; these read FLVS…VVSR and KQES…LADC. Residues 1274-1408 are UPA domain; it reads VSFTTNVSAR…SIKIRDTSQE (135 aa). A phosphoserine mark is found at Ser-1451, Ser-1462, Ser-1470, Ser-1473, and Gly-1560. Positions 1478-1562 constitute a Death domain; that stretch reads TDIRMAIVAD…DIVTLLEGPI (85 aa). 5 disordered regions span residues 1606–1678, 1698–1740, 1784–1818, 1844–1884, and 1915–1961; these read PNPF…DPLD, SVPG…VTED, WQNETPSGSLESPAQARRLTGGLLDRLDDSSDQAR, PEAK…PVSP, and MTRT…KKTH. Basic and acidic residues predominate over residues 1725–1740; sequence QQEKGKSGPDEEVTED. The segment covering 1784-1795 has biased composition (polar residues); the sequence is WQNETPSGSLES. Residues Ser-1795, Ser-1813, and Ser-1883 each carry the phosphoserine modification. Over residues 1808 to 1818 the composition is skewed to basic and acidic residues; sequence DRLDDSSDQAR. Positions 1933–1961 are enriched in basic and acidic residues; the sequence is GSTRSEPKQGEGYKVKTKKEIRNVEKKTH.

May be a constituent of a NFASC/NRCAM/ankyrin G complex. Interacts with RHBG. Directly interacts with DMD and betaDAG1; this interaction does not interfere with DMD-binding and is required for DMD and betaDAG1 retention at costameres. Interacts (via N-terminal ANK repeats) with SCHIP1 isoform 7 (via C-terminus); this interaction is required for the localization at axon initial segments (AISs) and nodes of Ranvier (NRs). Interacts with PLEC and FLNC. Interacts with KCNA1; this inhibits channel activity. Interacts with SCN5A. Interacts with PKP2 and GJA1/CX43. In terms of tissue distribution, expressed in many epithelial tissues, muscles and axons. Expressed in kidney, brain, skin, lung, liver, intestine, pancreas, heart and testis (at protein level). In testis, expressed in Leydig cells, but very weakly or not at all in Sertoli cells or seminiferous tubules. Expressed in macrophages (at protein level).

Its subcellular location is the cytoplasm. It is found in the cytoskeleton. The protein localises to the cell projection. The protein resides in the axon. It localises to the cell membrane. Its subcellular location is the sarcolemma. It is found in the postsynaptic cell membrane. The protein localises to the lysosome. The protein resides in the T-tubule. Its function is as follows. Membrane-cytoskeleton linker. May participate in the maintenance/targeting of ion channels and cell adhesion molecules at the nodes of Ranvier and axonal initial segments. In skeletal muscle, required for costamere localization of DMD and betaDAG1. Regulates KCNA1 channel activity in function of dietary Mg(2+) levels, and thereby contributes to the regulation of renal Mg(2+) reabsorption. Required for intracellular adhesion and junctional conductance in myocytes, potentially via stabilization of GJA1/CX43 protein abundance and promotion of PKP2, GJA1/CX43, and SCN5A/Nav1.5 localization to cell-cell junctions. The polypeptide is Ankyrin-3 (Ank3) (Mus musculus (Mouse)).